We begin with the raw amino-acid sequence, 295 residues long: MQTFAEIALLREQIRAWRREGRRIAFVPTMGNLHDGHLTLVRKAREHADIVVVSIFVNPMQFEKADDLTNYPRTLENDLAKLNSEGVDLVFTPTPEVMYPQGLERQTFVEVPGLSQMLEGALRPGHFRGVATVVTKLFNMVQPDVACFGEKDYQQLALLRQMTLDMAMDIEIIGVPTVREMDGLAMSSRNGYLTVDERQRAPVLARTMRWVSSQMRGGRTDYSEIIVDANDQLRAAGLQPDESYIRDAVTLQAVSEETQQAVILMSAQLGKARLIDNQVVELTQPAAPVAEAAES.

30–37 serves as a coordination point for ATP; it reads MGNLHDGH. Catalysis depends on His-37, which acts as the Proton donor. Residue Gln-61 participates in (R)-pantoate binding. Gln-61 lines the beta-alanine pocket. 149–152 serves as a coordination point for ATP; sequence GEKD. Gln-155 lines the (R)-pantoate pocket. ATP is bound by residues Val-178 and 186 to 189; that span reads MSSR.

Belongs to the pantothenate synthetase family. As to quaternary structure, homodimer.

It localises to the cytoplasm. The catalysed reaction is (R)-pantoate + beta-alanine + ATP = (R)-pantothenate + AMP + diphosphate + H(+). Its pathway is cofactor biosynthesis; (R)-pantothenate biosynthesis; (R)-pantothenate from (R)-pantoate and beta-alanine: step 1/1. In terms of biological role, catalyzes the condensation of pantoate with beta-alanine in an ATP-dependent reaction via a pantoyl-adenylate intermediate. The sequence is that of Pantothenate synthetase from Photobacterium profundum (strain SS9).